Here is a 72-residue protein sequence, read N- to C-terminus: Translation initiation factor IF-1 2 (72 aa).

The 72-residue stretch at M1–K72 folds into the S1-like domain.

Belongs to the IF-1 family. As to quaternary structure, component of the 30S ribosomal translation pre-initiation complex which assembles on the 30S ribosome in the order IF-2 and IF-3, IF-1 and N-formylmethionyl-tRNA(fMet); mRNA recruitment can occur at any time during PIC assembly.

It localises to the cytoplasm. Its function is as follows. One of the essential components for the initiation of protein synthesis. Stabilizes the binding of IF-2 and IF-3 on the 30S subunit to which N-formylmethionyl-tRNA(fMet) subsequently binds. Helps modulate mRNA selection, yielding the 30S pre-initiation complex (PIC). Upon addition of the 50S ribosomal subunit IF-1, IF-2 and IF-3 are released leaving the mature 70S translation initiation complex. The polypeptide is Translation initiation factor IF-1 2 (Cupriavidus necator (strain ATCC 17699 / DSM 428 / KCTC 22496 / NCIMB 10442 / H16 / Stanier 337) (Ralstonia eutropha)).